Reading from the N-terminus, the 912-residue chain is MMPSQITRSSHSSLPEVAPASGDATGVSEQTPQQARTVAFFSSGELAVAFGRTSAAPEQDSVRLLSALQRELDKQHPSWHTVAQLCQSLAEVGTTEQGWHQLASEDQLPALRELLDRCTHRLADMPAAHASHDSLSQACEGLRTARLHQSVARLTARPSSLARAMADLLTLTHLDPETLGAEPPVISSYTLFSHFVRTAKQRTADLNDSLQRQPDAVVSLLRSHADTLNDLEMLPGALQALTENCQDAPARNELRELAEVAGALLQLLLEHDLLPRLEEISIEPGEAPAPGHEPAEPRLTTRQALLKVGGNLVRKFDAYGALAPMDDKALLALMRTPAPHLSPDQMHAFLNKHVLHLTQEQRDIVSNTPLPFAPEEDIEARYGMGFDEKLRLALANGSLVLSEEQLARLGDLPSAATTTSDVVQTLLEKPSSALSEAERDMLGAIVQANAQGQLDAWRAHNEQLPAVLSRSGLPSDVKDELLSLNKSMNAELGTLKNGASLKSRVLASPAMLLALAPLPLAVAFVSKDNSYSSSLVAHFTKNAVFMAGLMMNELTNARTNVDHGLNRYFVTVLANAIVAQPTFARNEHLLEQVGFGIATAVASGAATLGVFNRESIVAAFKLAKSKLSRQDTGNARIPQEDHLAVVKHFDVSEHFAQQMKVATELYKQDKSITDIMNSSLTYLGTKSSEFQARFEVADALRAGLQLAEGERKADPDFYTKLGLVALTASIGAALVMLMKSMVGKADYAADGVWCVSEMLKLAMNPEVDMQKAVQVFKEIVGLNLVMTGFLGVNKVWNFLDKGIKGYASGAAVLTAANLTLPGMVGEVAGAAAGKGLSYLTDKGKAAHQAGRAAASWAGDYVSTSRLGSAVGTLQTAIPGRIAGGQVVAGLYDRFRYLTWSHPAPAPQAAGEP.

The span at 1 to 13 shows a compositional bias: polar residues; that stretch reads MMPSQITRSSHSS. The segment at 1 to 32 is disordered; it reads MMPSQITRSSHSSLPEVAPASGDATGVSEQTP.

It belongs to the HopW family.

The protein resides in the secreted. The protein is Effector protein hopAE1 (hopAE1) of Pseudomonas savastanoi pv. phaseolicola (strain 1448A / Race 6) (Pseudomonas syringae pv. phaseolicola (strain 1448A / Race 6)).